A 311-amino-acid polypeptide reads, in one-letter code: Ribonuclease Z (311 aa).

His-61, His-63, Asp-65, His-66, His-137, Asp-207, and His-263 together coordinate Zn(2+). Catalysis depends on Asp-65, which acts as the Proton acceptor.

It belongs to the RNase Z family. As to quaternary structure, homodimer. Requires Zn(2+) as cofactor.

The enzyme catalyses Endonucleolytic cleavage of RNA, removing extra 3' nucleotides from tRNA precursor, generating 3' termini of tRNAs. A 3'-hydroxy group is left at the tRNA terminus and a 5'-phosphoryl group is left at the trailer molecule.. Functionally, zinc phosphodiesterase, which displays some tRNA 3'-processing endonuclease activity. Probably involved in tRNA maturation, by removing a 3'-trailer from precursor tRNA. In Thermococcus onnurineus (strain NA1), this protein is Ribonuclease Z.